Reading from the N-terminus, the 128-residue chain is Small ribosomal subunit protein uS13 (128 aa).

Residues 95 to 118 (GLPVRGQRTHTNARTRKGPKKGLV) show a composition bias toward basic residues. The interval 95–128 (GLPVRGQRTHTNARTRKGPKKGLVRKAAAPAPMA) is disordered.

This sequence belongs to the universal ribosomal protein uS13 family. As to quaternary structure, part of the 30S ribosomal subunit. Forms a loose heterodimer with protein S19. Forms two bridges to the 50S subunit in the 70S ribosome.

Located at the top of the head of the 30S subunit, it contacts several helices of the 16S rRNA. In the 70S ribosome it contacts the 23S rRNA (bridge B1a) and protein L5 of the 50S subunit (bridge B1b), connecting the 2 subunits; these bridges are implicated in subunit movement. Contacts the tRNAs in the A and P-sites. The sequence is that of Small ribosomal subunit protein uS13 from Anaeromyxobacter dehalogenans (strain 2CP-1 / ATCC BAA-258).